The chain runs to 301 residues: Glycine--tRNA ligase alpha subunit (301 aa).

It belongs to the class-II aminoacyl-tRNA synthetase family. Tetramer of two alpha and two beta subunits.

The protein resides in the cytoplasm. It catalyses the reaction tRNA(Gly) + glycine + ATP = glycyl-tRNA(Gly) + AMP + diphosphate. This chain is Glycine--tRNA ligase alpha subunit, found in Variovorax paradoxus (strain S110).